The chain runs to 100 residues: Urease subunit gamma (100 aa).

It belongs to the urease gamma subunit family. As to quaternary structure, heterotrimer of UreA (gamma), UreB (beta) and UreC (alpha) subunits. Three heterotrimers associate to form the active enzyme.

The protein localises to the cytoplasm. The enzyme catalyses urea + 2 H2O + H(+) = hydrogencarbonate + 2 NH4(+). Its pathway is nitrogen metabolism; urea degradation; CO(2) and NH(3) from urea (urease route): step 1/1. This Prochlorococcus marinus subsp. pastoris (strain CCMP1986 / NIES-2087 / MED4) protein is Urease subunit gamma.